The following is a 316-amino-acid chain: Olfactory receptor 5P79 (316 aa).

Topologically, residues 1–28 (MGILKDGNHTAVTEFILLGLTDDPVLKV) are extracellular. Residue Asn8 is glycosylated (N-linked (GlcNAc...) asparagine). A helical transmembrane segment spans residues 29–49 (VLFTIILCIYLVTVSGNLSTI). Over 50-57 (LLIRVSSQ) the chain is Cytoplasmic. Residues 58–78 (LHHPMYFFLSHLASVDIGISS) form a helical membrane-spanning segment. Over 79–102 (SVTPNMLVNFLLERSTISYLGCGI) the chain is Extracellular. A disulfide bridge connects residues Cys100 and Cys192. A helical membrane pass occupies residues 103–123 (QLGSGAFFGSTESFLLAAMAY). Residues 124–136 (DHFMAICNPLLYS) lie on the Cytoplasmic side of the membrane. A helical transmembrane segment spans residues 137–157 (TKMSTQVCIQLLVGSYIGGFL). The Extracellular segment spans residues 158 to 199 (NASSFILSFFSFLFCGPNKVNHFFCDFTPLVELSCSDNSVLL). Residues 200 to 220 (ILDSFSAGSIIVITVLVIAIS) form a helical membrane-spanning segment. Topologically, residues 221–240 (YTYILITILKMHSTEGRHKA) are cytoplasmic. The chain crosses the membrane as a helical span at residues 241 to 261 (FSTCTSHLTAVTVFYGTVTFI). The Extracellular segment spans residues 262–274 (YVMPKSSYSTDQN). The helical transmembrane segment at 275–297 (KVLSVFYMIAIAIPMLNPLIYSL) threads the bilayer. Over 298–316 (RNNEIKNALKRQLSKKTFS) the chain is Cytoplasmic.

Belongs to the G-protein coupled receptor 1 family.

Its subcellular location is the cell membrane. In terms of biological role, potential odorant receptor. The chain is Olfactory receptor 5P79 from Mus musculus (Mouse).